A 341-amino-acid chain; its full sequence is Dihydroorotate dehydrogenase (quinone) (341 aa).

Residues Ala-61–Lys-65 and Thr-85 contribute to the FMN site. Lys-65 is a binding site for substrate. Position 110–114 (Asn-110–Phe-114) interacts with substrate. Positions 138 and 171 each coordinate FMN. Asn-171 is a substrate binding site. The active-site Nucleophile is Ser-174. Position 176 (Asn-176) interacts with substrate. FMN-binding residues include Lys-216 and Thr-244. Position 245–246 (Asn-245–Thr-246) interacts with substrate. Residues Gly-267, Gly-296, and Tyr-317 to Ser-318 contribute to the FMN site.

It belongs to the dihydroorotate dehydrogenase family. Type 2 subfamily. Monomer. It depends on FMN as a cofactor.

The protein localises to the cell membrane. It catalyses the reaction (S)-dihydroorotate + a quinone = orotate + a quinol. It participates in pyrimidine metabolism; UMP biosynthesis via de novo pathway; orotate from (S)-dihydroorotate (quinone route): step 1/1. Functionally, catalyzes the conversion of dihydroorotate to orotate with quinone as electron acceptor. In Pseudomonas fluorescens (strain SBW25), this protein is Dihydroorotate dehydrogenase (quinone).